Consider the following 104-residue polypeptide: DNA-directed RNA polymerase subunit omega (104 aa).

The protein belongs to the RNA polymerase subunit omega family. The RNAP catalytic core consists of 2 alpha, 1 beta, 1 beta' and 1 omega subunit. When a sigma factor is associated with the core the holoenzyme is formed, which can initiate transcription.

It catalyses the reaction RNA(n) + a ribonucleoside 5'-triphosphate = RNA(n+1) + diphosphate. Functionally, promotes RNA polymerase assembly. Latches the N- and C-terminal regions of the beta' subunit thereby facilitating its interaction with the beta and alpha subunits. The protein is DNA-directed RNA polymerase subunit omega of Streptococcus suis (strain 05ZYH33).